A 181-amino-acid polypeptide reads, in one-letter code: MAQTGNFKSPARMSSLGQGAAPASSGAVTGGKPREGGLKGVDFERRGFLHKIVGGVGAVVAVSTLYPVVKYIIPPARKIKNVDELTVGKASEVPDGKSKIFQFNEDKVIVVNKGGALTAVSAVCTHLGCLVNWVDADNQYFCPCHGAKYKLTGEIISGPQPLPLKQYKARIEGDSIIISKA.

Residues 1 to 35 form a disordered region; sequence MAQTGNFKSPARMSSLGQGAAPASSGAVTGGKPRE. Transmembrane regions (helical) follow at residues 53–73 and 114–134; these read VGGVGAVVAVSTLYPVVKYII and GGALTAVSAVCTHLGCLVNWV. The Rieske domain maps to 85 to 178; the sequence is LTVGKASEVP…ARIEGDSIII (94 aa). Residues cysteine 124, histidine 126, cysteine 142, and histidine 145 each coordinate [2Fe-2S] cluster. Cysteine 129 and cysteine 144 form a disulfide bridge.

This sequence belongs to the Rieske iron-sulfur protein family. [2Fe-2S] cluster is required as a cofactor.

The protein localises to the cell inner membrane. It carries out the reaction 2 oxidized [plastocyanin] + a plastoquinol + 2 H(+)(in) = 2 reduced [plastocyanin] + a plastoquinone + 4 H(+)(out). Component of the green S-bacteria bc-complex which consists of the Rieske protein and cytochrome b subunit and which appears to lack a cytochrome c1-equivalent. This complex has a comparatively low redox potential. In Chlorobaculum thiosulfatiphilum (Chlorobium limicola f.sp. thiosulfatophilum), this protein is Cytochrome b6-f complex iron-sulfur subunit (petC).